The following is a 384-amino-acid chain: Cytochrome b (384 aa).

A run of 4 helical transmembrane segments spans residues 32–52, 76–98, 113–133, and 179–199; these read FGFL…FLAI, WLLR…IHIS, TWVV…MGYV, and FFSF…VHMA. Positions 82 and 96 each coordinate heme b. H183 and H197 together coordinate heme b. H202 is a binding site for a ubiquinone. The next 4 membrane-spanning stretches (helical) occupy residues 225–245, 289–309, 321–341, and 348–368; these read FIIK…LFVY, LGGV…PWIT, LYKK…WIGG, and YVVI…IFIP.

This sequence belongs to the cytochrome b family. As to quaternary structure, the main subunits of complex b-c1 are: cytochrome b, cytochrome c1 and the Rieske protein. Requires heme b as cofactor.

Its subcellular location is the mitochondrion inner membrane. In terms of biological role, component of the ubiquinol-cytochrome c reductase complex (complex III or cytochrome b-c1 complex) that is part of the mitochondrial respiratory chain. The b-c1 complex mediates electron transfer from ubiquinol to cytochrome c. Contributes to the generation of a proton gradient across the mitochondrial membrane that is then used for ATP synthesis. The chain is Cytochrome b (MT-CYB) from Cyanidium caldarium (Red alga).